We begin with the raw amino-acid sequence, 166 residues long: Large ribosomal subunit protein uL11 (166 aa).

Belongs to the universal ribosomal protein uL11 family.

The polypeptide is Large ribosomal subunit protein uL11 (rpl12) (Dictyostelium discoideum (Social amoeba)).